A 234-amino-acid chain; its full sequence is 1-(5-phosphoribosyl)-5-[(5-phosphoribosylamino)methylideneamino] imidazole-4-carboxamide isomerase (234 aa).

Aspartate 9 serves as the catalytic Proton acceptor. Aspartate 131 acts as the Proton donor in catalysis.

The protein belongs to the HisA/HisF family.

The protein resides in the cytoplasm. It carries out the reaction 1-(5-phospho-beta-D-ribosyl)-5-[(5-phospho-beta-D-ribosylamino)methylideneamino]imidazole-4-carboxamide = 5-[(5-phospho-1-deoxy-D-ribulos-1-ylimino)methylamino]-1-(5-phospho-beta-D-ribosyl)imidazole-4-carboxamide. Its pathway is amino-acid biosynthesis; L-histidine biosynthesis; L-histidine from 5-phospho-alpha-D-ribose 1-diphosphate: step 4/9. This is 1-(5-phosphoribosyl)-5-[(5-phosphoribosylamino)methylideneamino] imidazole-4-carboxamide isomerase from Staphylococcus aureus (strain MRSA252).